A 149-amino-acid chain; its full sequence is Transthyretin (149 aa).

A signal peptide spans 1-22; that stretch reads MAFHSLLLLCLAGLAFVSETAA. At C32 the chain carries Sulfocysteine. An L-thyroxine-binding site is contributed by K37. E64 carries the 4-carboxyglutamate modification. E76 and S139 together coordinate L-thyroxine.

It belongs to the transthyretin family. Homotetramer. Dimer of dimers. In the homotetramer, subunits assemble around a central channel that can accommodate two ligand molecules. Interacts with RBP4. Sulfonation of the reactive cysteine Cys-32 enhances the stability of the native conformation of TTR, avoiding misassembly of the protein leading to amyloid formation. Detected in liver.

Its subcellular location is the secreted. Functionally, thyroid hormone-binding protein. Probably transports thyroxine from the bloodstream to the brain. In Macropus giganteus (Eastern gray kangaroo), this protein is Transthyretin (TTR).